Here is a 165-residue protein sequence, read N- to C-terminus: Nucleotide-binding protein Syncc9902_1708 (165 aa).

This sequence belongs to the YajQ family.

Nucleotide-binding protein. The protein is Nucleotide-binding protein Syncc9902_1708 of Synechococcus sp. (strain CC9902).